Consider the following 422-residue polypeptide: Lipase member M (422 aa).

The N-terminal stretch at 1–33 (MSEILSRVWTVSHRVEIWLLILVAYLLQRNVNS) is a signal peptide. N-linked (GlcNAc...) asparagine glycosylation is present at N48. An AB hydrolase-1 domain is found at 92–392 (PVVLLQHGLL…EWAHVDFIWG (301 aa)). Residue S186 is the Nucleophile of the active site. A disulfide bridge connects residues C260 and C269. Residues D357 and H386 each act as charge relay system in the active site.

Belongs to the AB hydrolase superfamily. Lipase family.

It is found in the secreted. Its function is as follows. Plays a highly specific role in the last step of keratinocyte differentiation. May have an essential function in lipid metabolism of the most differentiated epidermal layers. This is Lipase member M (Lipm) from Mus musculus (Mouse).